The primary structure comprises 274 residues: Tryptophan synthase alpha chain (274 aa).

Residues Glu49 and Asp60 each act as proton acceptor in the active site.

The protein belongs to the TrpA family. As to quaternary structure, tetramer of two alpha and two beta chains.

It catalyses the reaction (1S,2R)-1-C-(indol-3-yl)glycerol 3-phosphate + L-serine = D-glyceraldehyde 3-phosphate + L-tryptophan + H2O. Its pathway is amino-acid biosynthesis; L-tryptophan biosynthesis; L-tryptophan from chorismate: step 5/5. In terms of biological role, the alpha subunit is responsible for the aldol cleavage of indoleglycerol phosphate to indole and glyceraldehyde 3-phosphate. In Gluconacetobacter diazotrophicus (strain ATCC 49037 / DSM 5601 / CCUG 37298 / CIP 103539 / LMG 7603 / PAl5), this protein is Tryptophan synthase alpha chain.